A 372-amino-acid polypeptide reads, in one-letter code: Cytochrome b (372 aa).

4 helical membrane-spanning segments follow: residues 25–45 (FGSMLLTCLALQTMTGFFLAI), 69–90 (WMMQNLHAIGASMFFICIYIHI), 105–125 (WLSGTTLLIILMATAFFGYVL), and 170–190 (FFALHFILPFTIISMSSIHIM). Heme b-binding residues include His-75 and His-89. Heme b contacts are provided by His-174 and His-188. His-193 serves as a coordination point for a ubiquinone. Helical transmembrane passes span 218–238 (HKDMLMFTIMITMLFIIMSFT), 280–300 (LGGTVALVLSVTILLTMPFTH), 312–332 (LMQFMFWTLVATFITITWAAT), and 339–358 (FTSIGQVTAILYFLFFTMNP).

This sequence belongs to the cytochrome b family. The cytochrome bc1 complex contains 3 respiratory subunits (MT-CYB, CYC1 and UQCRFS1), 2 core proteins (UQCRC1 and UQCRC2) and probably 6 low-molecular weight proteins. Heme b serves as cofactor.

Its subcellular location is the mitochondrion inner membrane. Its function is as follows. Component of the ubiquinol-cytochrome c reductase complex (complex III or cytochrome b-c1 complex) that is part of the mitochondrial respiratory chain. The b-c1 complex mediates electron transfer from ubiquinol to cytochrome c. Contributes to the generation of a proton gradient across the mitochondrial membrane that is then used for ATP synthesis. The polypeptide is Cytochrome b (MT-CYB) (Pantherophis vulpinus (Western fox snake)).